The following is a 219-amino-acid chain: Orotate phosphoribosyltransferase (219 aa).

K26 is a 5-phospho-alpha-D-ribose 1-diphosphate binding site. Orotate is bound at residue 34 to 35; the sequence is FF. Residues 72 to 73, R98, K99, K102, H104, and 124 to 132 contribute to the 5-phospho-alpha-D-ribose 1-diphosphate site; these read YK and DDVITAGTA. Residues T128 and R156 each contribute to the orotate site.

This sequence belongs to the purine/pyrimidine phosphoribosyltransferase family. PyrE subfamily. In terms of assembly, homodimer. Mg(2+) is required as a cofactor.

The enzyme catalyses orotidine 5'-phosphate + diphosphate = orotate + 5-phospho-alpha-D-ribose 1-diphosphate. Its pathway is pyrimidine metabolism; UMP biosynthesis via de novo pathway; UMP from orotate: step 1/2. Functionally, catalyzes the transfer of a ribosyl phosphate group from 5-phosphoribose 1-diphosphate to orotate, leading to the formation of orotidine monophosphate (OMP). The chain is Orotate phosphoribosyltransferase from Xylella fastidiosa (strain M23).